Reading from the N-terminus, the 255-residue chain is tRNA (guanine-N(1)-)-methyltransferase (255 aa).

Residues glycine 117 and 137–142 (LGDFVL) each bind S-adenosyl-L-methionine.

It belongs to the RNA methyltransferase TrmD family. Homodimer.

The protein localises to the cytoplasm. It catalyses the reaction guanosine(37) in tRNA + S-adenosyl-L-methionine = N(1)-methylguanosine(37) in tRNA + S-adenosyl-L-homocysteine + H(+). Its function is as follows. Specifically methylates guanosine-37 in various tRNAs. The sequence is that of tRNA (guanine-N(1)-)-methyltransferase from Paraburkholderia phytofirmans (strain DSM 17436 / LMG 22146 / PsJN) (Burkholderia phytofirmans).